We begin with the raw amino-acid sequence, 370 residues long: Anhydro-N-acetylmuramic acid kinase (370 aa).

12 to 19 (GTSLDGVD) provides a ligand contact to ATP.

It belongs to the anhydro-N-acetylmuramic acid kinase family.

The enzyme catalyses 1,6-anhydro-N-acetyl-beta-muramate + ATP + H2O = N-acetyl-D-muramate 6-phosphate + ADP + H(+). It functions in the pathway amino-sugar metabolism; 1,6-anhydro-N-acetylmuramate degradation. The protein operates within cell wall biogenesis; peptidoglycan recycling. Catalyzes the specific phosphorylation of 1,6-anhydro-N-acetylmuramic acid (anhMurNAc) with the simultaneous cleavage of the 1,6-anhydro ring, generating MurNAc-6-P. Is required for the utilization of anhMurNAc either imported from the medium or derived from its own cell wall murein, and thus plays a role in cell wall recycling. This Yersinia pseudotuberculosis serotype O:1b (strain IP 31758) protein is Anhydro-N-acetylmuramic acid kinase.